A 440-amino-acid chain; its full sequence is 3-phosphoshikimate 1-carboxyvinyltransferase (440 aa).

3 residues coordinate 3-phosphoshikimate: Lys28, Ser29, and Arg33. Lys28 contributes to the phosphoenolpyruvate binding site. The phosphoenolpyruvate site is built by Gly98 and Arg126. The 3-phosphoshikimate site is built by Ser171, Gln173, Asp318, and Lys345. A phosphoenolpyruvate-binding site is contributed by Gln173. The active-site Proton acceptor is Asp318. Phosphoenolpyruvate-binding residues include Arg349 and Arg391.

It belongs to the EPSP synthase family. As to quaternary structure, monomer.

It localises to the cytoplasm. It catalyses the reaction 3-phosphoshikimate + phosphoenolpyruvate = 5-O-(1-carboxyvinyl)-3-phosphoshikimate + phosphate. It functions in the pathway metabolic intermediate biosynthesis; chorismate biosynthesis; chorismate from D-erythrose 4-phosphate and phosphoenolpyruvate: step 6/7. In terms of biological role, catalyzes the transfer of the enolpyruvyl moiety of phosphoenolpyruvate (PEP) to the 5-hydroxyl of shikimate-3-phosphate (S3P) to produce enolpyruvyl shikimate-3-phosphate and inorganic phosphate. The chain is 3-phosphoshikimate 1-carboxyvinyltransferase from Anaeromyxobacter dehalogenans (strain 2CP-C).